Consider the following 116-residue polypeptide: Ferredoxin-like protein in nif region (116 aa).

The 4Fe-4S ferredoxin-type domain occupies 2–29; that stretch reads AYTITSQCISCKLCSSVCPTGAIKVAED. 4 residues coordinate iron-sulfur cluster: Cys9, Cys12, Cys15, and Cys19.

The protein is Ferredoxin-like protein in nif region (fdxN) of Trichormus azollae (Anabaena azollae).